The primary structure comprises 374 residues: tRNA-specific 2-thiouridylase MnmA (374 aa).

Residues 13 to 20 (GMSGGVDS) and Met-39 contribute to the ATP site. The tract at residues 99–101 (NPD) is interaction with target base in tRNA. Residue Cys-104 is the Nucleophile of the active site. A disulfide bridge links Cys-104 with Cys-201. Gly-128 contributes to the ATP binding site. Positions 151–153 (KDQ) are interaction with tRNA. Cys-201 functions as the Cysteine persulfide intermediate in the catalytic mechanism. Residues 313-314 (RY) form an interaction with tRNA region.

It belongs to the MnmA/TRMU family.

Its subcellular location is the cytoplasm. It catalyses the reaction S-sulfanyl-L-cysteinyl-[protein] + uridine(34) in tRNA + AH2 + ATP = 2-thiouridine(34) in tRNA + L-cysteinyl-[protein] + A + AMP + diphosphate + H(+). Catalyzes the 2-thiolation of uridine at the wobble position (U34) of tRNA, leading to the formation of s(2)U34. The polypeptide is tRNA-specific 2-thiouridylase MnmA (Streptococcus equi subsp. zooepidemicus (strain MGCS10565)).